We begin with the raw amino-acid sequence, 108 residues long: Peptidyl-prolyl cis-trans isomerase FKBP1B (108 aa).

A PPIase FKBP-type domain is found at 20–108; the sequence is GQTCVVHYTG…IFDVELLNLE (89 aa).

In terms of assembly, identified in a complex composed of RYR2, FKBP1B, PKA catalytic subunit, PRKAR2A, AKAP6, and the protein phosphatases PP2A and PP1. Interacts directly with RYR2.

It localises to the cytoplasm. The protein resides in the sarcoplasmic reticulum. It catalyses the reaction [protein]-peptidylproline (omega=180) = [protein]-peptidylproline (omega=0). With respect to regulation, inhibited by both FK506 and rapamycin. Functionally, has the potential to contribute to the immunosuppressive and toxic effects of FK506 and rapamycin. PPIases accelerate the folding of proteins. It catalyzes the cis-trans isomerization of proline imidic peptide bonds in oligopeptides. This chain is Peptidyl-prolyl cis-trans isomerase FKBP1B (FKBP1B), found in Bos taurus (Bovine).